The chain runs to 289 residues: MFVRNTASVVRGTSRNYATLREIETRLKSIKNIEKITKTMKIVASTRLSKAERAKNSAKEYALADAAFYKNAETVPLEDAEKKDLIIAITSDKGLCGSIHSQLAKAVRLQLKQTPNADVVAIGDKVKGQLLRTNSDNLKFAFNGVGKEAPTFEETSLIANKILEGGASNYKKVSIFWNDPISSLSFEPSNKPVFNAAAIEQSPSFSKFEIDADNNVSQDLFEFTLSNEILAAMAEGYAAEVSARRNAMDNASKNAGDMINSYSILYNRTRQAVITNELVDIITGASSLD.

The protein belongs to the ATPase gamma chain family. In terms of assembly, F-type ATPases have 2 components, CF(1) - the catalytic core - and CF(0) - the membrane proton channel. CF(1) has five subunits: alpha(3), beta(3), gamma(1), delta(1), epsilon(1). CF(0) has three main subunits: a, b and c.

It is found in the mitochondrion. It localises to the mitochondrion inner membrane. Functionally, mitochondrial membrane ATP synthase (F(1)F(0) ATP synthase or Complex V) produces ATP from ADP in the presence of a proton gradient across the membrane which is generated by electron transport complexes of the respiratory chain. F-type ATPases consist of two structural domains, F(1) - containing the extramembraneous catalytic core, and F(0) - containing the membrane proton channel, linked together by a central stalk and a peripheral stalk. During catalysis, ATP synthesis in the catalytic domain of F(1) is coupled via a rotary mechanism of the central stalk subunits to proton translocation. Part of the complex F(1) domain and the central stalk which is part of the complex rotary element. The gamma subunit protrudes into the catalytic domain formed of alpha(3)beta(3). Rotation of the central stalk against the surrounding alpha(3)beta(3) subunits leads to hydrolysis of ATP in three separate catalytic sites on the beta subunits. The polypeptide is ATP synthase subunit gamma, mitochondrial (ATP3) (Kluyveromyces lactis (strain ATCC 8585 / CBS 2359 / DSM 70799 / NBRC 1267 / NRRL Y-1140 / WM37) (Yeast)).